We begin with the raw amino-acid sequence, 284 residues long: 2,3,4,5-tetrahydropyridine-2,6-dicarboxylate N-succinyltransferase (284 aa).

Residues R111 and D148 each contribute to the substrate site.

The protein belongs to the transferase hexapeptide repeat family. Homotrimer.

Its subcellular location is the cytoplasm. It carries out the reaction (S)-2,3,4,5-tetrahydrodipicolinate + succinyl-CoA + H2O = (S)-2-succinylamino-6-oxoheptanedioate + CoA. The protein operates within amino-acid biosynthesis; L-lysine biosynthesis via DAP pathway; LL-2,6-diaminopimelate from (S)-tetrahydrodipicolinate (succinylase route): step 1/3. The sequence is that of 2,3,4,5-tetrahydropyridine-2,6-dicarboxylate N-succinyltransferase from Agrobacterium fabrum (strain C58 / ATCC 33970) (Agrobacterium tumefaciens (strain C58)).